We begin with the raw amino-acid sequence, 726 residues long: Pre-mRNA-splicing factor CLF1 (726 aa).

HAT repeat units lie at residues Glu55–Ser87, Asn89–Lys121, Arg123–Leu155, Leu157–Arg188, Asn190–Asp221, Gly223–Arg262, Lys264–Gln298, Thr308–Asp340, Val352–Gln386, Lys396–Arg432, Leu434–Arg465, Arg467–Ala499, Glu501–Gly534, Gly536–Ala567, Gly585–Asp626, and Asp635–Arg667. The disordered stretch occupies residues Ala682–Asp726. A compositionally biased stretch (acidic residues) spans Ser702–Asp726.

The protein belongs to the crooked-neck family. In terms of assembly, associated with the spliceosome.

It is found in the nucleus. Involved in pre-mRNA splicing and cell cycle progression. Required for the spliceosome assembly and initiation of the DNA replication. The chain is Pre-mRNA-splicing factor CLF1 (CLF1) from Cryptococcus neoformans var. neoformans serotype D (strain B-3501A) (Filobasidiella neoformans).